The sequence spans 342 residues: Hypoxia responsive morphology factor C (342 aa).

A Bipartite nuclear localization signal motif is present at residues 46–68 (RMKIPRRKSEYSSHDRLKRARKI). Residues 151-181 (ADDAWAYNAADMDTAVKFFSEAIYKAIESSP) are RNA recognition motif (RRM)-like domain.

This sequence belongs to the hrmA family.

It is found in the nucleus. Functionally, probably modulates the generation of the hypoxia-typic morphotype (called H-MORPH) with altered biofilm architecture that leads to increased host inflammation, rapid disease progression, and mortality in a murine model of invasive aspergillosis. The protein is Hypoxia responsive morphology factor C of Aspergillus fumigatus (strain CBS 144.89 / FGSC A1163 / CEA10) (Neosartorya fumigata).